Consider the following 337-residue polypeptide: Ketol-acid reductoisomerase (NADP(+)) (337 aa).

Positions 3–183 (VEMFYDDDAD…GGTRAGVIKT (181 aa)) constitute a KARI N-terminal Rossmann domain. NADP(+) is bound by residues 26 to 29 (YGSQ), serine 52, serine 54, and 84 to 87 (DTAQ). The active site involves histidine 109. Glycine 135 serves as a coordination point for NADP(+). Residues 184–329 (TFKEETETDL…AKLRGLMSWV (146 aa)) form the KARI C-terminal knotted domain. Mg(2+) contacts are provided by aspartate 192, glutamate 196, glutamate 228, and glutamate 232. Substrate is bound at residue serine 253.

The protein belongs to the ketol-acid reductoisomerase family. Mg(2+) is required as a cofactor.

The catalysed reaction is (2R)-2,3-dihydroxy-3-methylbutanoate + NADP(+) = (2S)-2-acetolactate + NADPH + H(+). It catalyses the reaction (2R,3R)-2,3-dihydroxy-3-methylpentanoate + NADP(+) = (S)-2-ethyl-2-hydroxy-3-oxobutanoate + NADPH + H(+). It participates in amino-acid biosynthesis; L-isoleucine biosynthesis; L-isoleucine from 2-oxobutanoate: step 2/4. Its pathway is amino-acid biosynthesis; L-valine biosynthesis; L-valine from pyruvate: step 2/4. Its function is as follows. Involved in the biosynthesis of branched-chain amino acids (BCAA). Catalyzes an alkyl-migration followed by a ketol-acid reduction of (S)-2-acetolactate (S2AL) to yield (R)-2,3-dihydroxy-isovalerate. In the isomerase reaction, S2AL is rearranged via a Mg-dependent methyl migration to produce 3-hydroxy-3-methyl-2-ketobutyrate (HMKB). In the reductase reaction, this 2-ketoacid undergoes a metal-dependent reduction by NADPH to yield (R)-2,3-dihydroxy-isovalerate. This is Ketol-acid reductoisomerase (NADP(+)) from Nocardia farcinica (strain IFM 10152).